The primary structure comprises 70 residues: uncharacterized protein (70 aa).

A helical membrane pass occupies residues 15–37 (IFAFLLFRLCKFCCVFCCALCNV).

The protein localises to the membrane. This is an uncharacterized protein from Dictyostelium discoideum (Social amoeba).